A 347-amino-acid chain; its full sequence is Quinolinate synthase (347 aa).

His47 and Ser68 together coordinate iminosuccinate. Cys113 lines the [4Fe-4S] cluster pocket. Iminosuccinate-binding positions include 139 to 141 and Ser156; that span reads YAN. Cys200 contributes to the [4Fe-4S] cluster binding site. Iminosuccinate-binding positions include 226 to 228 and Thr243; that span reads HPE. Cys297 provides a ligand contact to [4Fe-4S] cluster.

This sequence belongs to the quinolinate synthase family. Type 1 subfamily. Requires [4Fe-4S] cluster as cofactor.

It is found in the cytoplasm. The catalysed reaction is iminosuccinate + dihydroxyacetone phosphate = quinolinate + phosphate + 2 H2O + H(+). The protein operates within cofactor biosynthesis; NAD(+) biosynthesis; quinolinate from iminoaspartate: step 1/1. Functionally, catalyzes the condensation of iminoaspartate with dihydroxyacetone phosphate to form quinolinate. This Shigella flexneri protein is Quinolinate synthase.